We begin with the raw amino-acid sequence, 545 residues long: Chaperonin GroEL (545 aa).

Residues 30–33 (TLGP), lysine 51, 87–91 (DGTTT), glycine 415, and aspartate 495 contribute to the ATP site.

The protein belongs to the chaperonin (HSP60) family. Forms a cylinder of 14 subunits composed of two heptameric rings stacked back-to-back. Interacts with the co-chaperonin GroES.

It is found in the cytoplasm. The catalysed reaction is ATP + H2O + a folded polypeptide = ADP + phosphate + an unfolded polypeptide.. Together with its co-chaperonin GroES, plays an essential role in assisting protein folding. The GroEL-GroES system forms a nano-cage that allows encapsulation of the non-native substrate proteins and provides a physical environment optimized to promote and accelerate protein folding. The sequence is that of Chaperonin GroEL from Shewanella oneidensis (strain ATCC 700550 / JCM 31522 / CIP 106686 / LMG 19005 / NCIMB 14063 / MR-1).